A 211-amino-acid chain; its full sequence is MTIGVVGRKCGMTRIFTEEGVSIPVTVIEIEPNRVTQFKTEETDGYRAVQVTVGERRASRVTAAQAGHFAKANVAAGRTVMEFRLEEGEYQAGDQINAEIFAAGQLVDVTGQSKGKGFQGTIKRWNFRGQDNTHGNSVSHRVPGSIGQCQTPGRVFKGKKMSGHMGAERVTVQSLEVVRVDAERNLLLVKGAVPGATGGNLVVRPAAKARG.

Position 150 is an N5-methylglutamine (Gln-150).

This sequence belongs to the universal ribosomal protein uL3 family. As to quaternary structure, part of the 50S ribosomal subunit. Forms a cluster with proteins L14 and L19. Post-translationally, methylated by PrmB.

One of the primary rRNA binding proteins, it binds directly near the 3'-end of the 23S rRNA, where it nucleates assembly of the 50S subunit. The sequence is that of Large ribosomal subunit protein uL3 from Pseudomonas syringae pv. tomato (strain ATCC BAA-871 / DC3000).